A 454-amino-acid polypeptide reads, in one-letter code: Inner membrane transport protein YajR (454 aa).

Over 1–14 the chain is Periplasmic; the sequence is MNDYKMTPGERRAT. The helical transmembrane segment at 15-35 threads the bilayer; that stretch reads WGLGTVFSLRMLGMFMVLPVL. The Cytoplasmic portion of the chain corresponds to 36 to 47; it reads TTYGMALQGASE. Residues 48-68 traverse the membrane as a helical segment; sequence ALIGIAIGIYGLTQAVFQIPF. Residues 69–84 are Periplasmic-facing; the sequence is GLLSDRIGRKPLIVGG. The chain crosses the membrane as a helical span at residues 85 to 105; that stretch reads LAVFAAGSVIAALSDSIWGII. Topologically, residues 106 to 137 are cytoplasmic; sequence LGRALQGSGAIAAAVMALLSDLTREQNRTKAM. The chain crosses the membrane as a helical span at residues 138-158; sequence AFIGVSFGITFAIAMVLGPII. Residues 159 to 165 are Periplasmic-facing; that stretch reads THKLGLH. The chain crosses the membrane as a helical span at residues 166–186; that stretch reads ALFWMIAILATTGIALTIWVV. At 187-216 the chain is on the cytoplasmic side; that stretch reads PNSSTHVLNRESGMVKGSFSKVLAEPRLLK. Residues 217–237 traverse the membrane as a helical segment; it reads LNFGIMCLHILLMSTFVALPG. At 238-252 the chain is on the periplasmic side; the sequence is QLADAGFPAAEHWKV. The helical transmembrane segment at 253-273 threads the bilayer; sequence YLATMLIAFGSVVPFIIYAEV. At 274–279 the chain is on the cytoplasmic side; that stretch reads KRKMKQ. A helical transmembrane segment spans residues 280–300; sequence VFVFCVGLIVVAEIVLWNAQT. The Periplasmic portion of the chain corresponds to 301–306; that stretch reads QFWQLV. A helical transmembrane segment spans residues 307–327; that stretch reads VGVQLFFVAFNLMEALLPSLI. Residues 328 to 340 lie on the Cytoplasmic side of the membrane; that stretch reads SKESPAGYKGTAM. Residues 341–361 form a helical membrane-spanning segment; the sequence is GVYSTSQFLGVAIGGSLGGWI. Residues 362–363 are Periplasmic-facing; sequence NG. A helical membrane pass occupies residues 364–384; it reads MFDGQGVFLAGAMLAAVWLTV. Over 385-454 the chain is Cytoplasmic; it reads ASTMKEPPYV…FEIEQAIRQA (70 aa).

The protein belongs to the major facilitator superfamily.

Its subcellular location is the cell inner membrane. This chain is Inner membrane transport protein YajR (yajR), found in Escherichia coli (strain K12).